Reading from the N-terminus, the 218-residue chain is Carboxylesterase 2 (218 aa).

Active-site charge relay system residues include Ser-114, Asp-168, and His-199.

The protein belongs to the AB hydrolase superfamily. AB hydrolase 2 family. Homodimer.

The enzyme catalyses a carboxylic ester + H2O = an alcohol + a carboxylate + H(+). Functionally, hydrolyzes carboxylic ester bonds with relatively broad substrate specificity. This chain is Carboxylesterase 2 (estB), found in Pseudomonas fluorescens.